The sequence spans 115 residues: NADH-ubiquinone oxidoreductase chain 3 (115 aa).

3 consecutive transmembrane segments (helical) span residues 3–23 (FVLILMTNTLLALLLMIITFW), 55–75 (FFLVAITFLLFDLEIALLLPL), and 84–104 (LPLMVTSSLLLITILALSLAY).

It belongs to the complex I subunit 3 family. In terms of assembly, core subunit of respiratory chain NADH dehydrogenase (Complex I) which is composed of 45 different subunits. Interacts with TMEM186. Interacts with TMEM242.

It is found in the mitochondrion inner membrane. The enzyme catalyses a ubiquinone + NADH + 5 H(+)(in) = a ubiquinol + NAD(+) + 4 H(+)(out). Functionally, core subunit of the mitochondrial membrane respiratory chain NADH dehydrogenase (Complex I) which catalyzes electron transfer from NADH through the respiratory chain, using ubiquinone as an electron acceptor. Essential for the catalytic activity of complex I. The chain is NADH-ubiquinone oxidoreductase chain 3 from Pan troglodytes (Chimpanzee).